The sequence spans 318 residues: tRNA-modifying protein YgfZ (318 aa).

Residues W28 and W182 each contribute to the folate site.

It belongs to the tRNA-modifying YgfZ family.

The protein resides in the cytoplasm. Functionally, folate-binding protein involved in regulating the level of ATP-DnaA and in the modification of some tRNAs. It is probably a key factor in regulatory networks that act via tRNA modification, such as initiation of chromosomal replication. In Aliivibrio fischeri (strain MJ11) (Vibrio fischeri), this protein is tRNA-modifying protein YgfZ.